We begin with the raw amino-acid sequence, 550 residues long: Arginine--tRNA ligase (550 aa).

A 'HIGH' region motif is present at residues 130-140; it reads ANPTGPIHIGG.

The protein belongs to the class-I aminoacyl-tRNA synthetase family. Monomer.

It is found in the cytoplasm. The enzyme catalyses tRNA(Arg) + L-arginine + ATP = L-arginyl-tRNA(Arg) + AMP + diphosphate. The chain is Arginine--tRNA ligase from Mycobacterium sp. (strain KMS).